We begin with the raw amino-acid sequence, 819 residues long: Proteome of basal body protein 15 (819 aa).

Composition is skewed to low complexity over residues 46 to 59 (PASSPAKAPANPGR) and 572 to 581 (RQQQQQQQHT). 2 disordered regions span residues 46–72 (PASSPAKAPANPGRSAPPSPGPRLATG) and 564–590 (ERQRRLLERQQQQQQQHTKGGGGGGGV). A coiled-coil region spans residues 546 to 580 (YVVLREAVARVQARMEQQERQRRLLERQQQQQQQH).

The protein resides in the cytoplasm. Its subcellular location is the cytoskeleton. It is found in the microtubule organizing center. It localises to the centrosome. The protein localises to the centriole. This chain is Proteome of basal body protein 15, found in Chlamydomonas reinhardtii (Chlamydomonas smithii).